Reading from the N-terminus, the 434-residue chain is MAQFDLTRINCQYLDRHLTFPLLEFLCGKEIYNQQELLEYILETVNKTNMIDYTMDTRKRLNLSQEMPEELVQRKAEVLATLKQLQNEVAPIMKATDILKNGESMKDSKTFVNALQKDYNFKVEHLESAYKLAKYLYECGNYQESTSYLYFCLIVMSPNDKNYLNVLWGKLAAEILTLNWNTALEDLTRLRDYIDSANFSTIQALQQRTWLIHWSVLVFFNHPKGRDLIIEMFLYKPLYLNAIQTMCPHIMRYLATAVVINRTRRNALKDLIKVIQQESYTYRDPITEFLECLYVNFDFEGARLKLHECQTVILNDFFIVACLNEFVEDARLMIFETFCRIHQCITISMLADKLNMKPNEAECWIVNLIRNARLNAKIDSKLGHVVMGTQPLSPYQQLVEKIDSLSMRSEHLAGLIERKSKQKNQESIDSWKYY.

Residues F219–L392 enclose the PCI domain.

The protein belongs to the eIF-3 subunit E family. Component of the eukaryotic translation initiation factor 3 (eIF-3) complex. The eIF-3 complex interacts with pix. Interacts with mxt.

It is found in the cytoplasm. In terms of biological role, component of the eukaryotic translation initiation factor 3 (eIF-3) complex, which is involved in protein synthesis of a specialized repertoire of mRNAs and, together with other initiation factors, stimulates binding of mRNA and methionyl-tRNAi to the 40S ribosome. The eIF-3 complex specifically targets and initiates translation of a subset of mRNAs involved in cell proliferation. This chain is Eukaryotic translation initiation factor 3 subunit E (eIF3-S6), found in Drosophila ananassae (Fruit fly).